The chain runs to 129 residues: MYDNLKSLGITNPDEIDRYSLRQEANNDILKIYFHKDKGEFFAKSVKFKYPRQRKTVVADGVGQGYKEVQEISPNLRYVIDELDQLCQRDRTEVDLKRKILDDLRHLESVVANKISEIESDLEKLTRNK.

Belongs to the UPF0325 family.

The sequence is that of UPF0325 protein ESA_03178 from Cronobacter sakazakii (strain ATCC BAA-894) (Enterobacter sakazakii).